Reading from the N-terminus, the 173-residue chain is ATP-dependent protease subunit HslV (173 aa).

Residue Thr-2 is part of the active site. Na(+) contacts are provided by Gly-158, Asp-161, and Ser-164.

The protein belongs to the peptidase T1B family. HslV subfamily. As to quaternary structure, a double ring-shaped homohexamer of HslV is capped on each side by a ring-shaped HslU homohexamer. The assembly of the HslU/HslV complex is dependent on binding of ATP.

Its subcellular location is the cytoplasm. The catalysed reaction is ATP-dependent cleavage of peptide bonds with broad specificity.. Its activity is regulated as follows. Allosterically activated by HslU binding. In terms of biological role, protease subunit of a proteasome-like degradation complex believed to be a general protein degrading machinery. The sequence is that of ATP-dependent protease subunit HslV from Actinobacillus pleuropneumoniae serotype 5b (strain L20).